The chain runs to 85 residues: CRISPR-associated endoribonuclease Cas2 (85 aa).

Asp8 contacts Mg(2+).

Belongs to the CRISPR-associated endoribonuclease Cas2 protein family. Homodimer, forms a heterotetramer with a Cas1 homodimer. Mg(2+) is required as a cofactor.

Its function is as follows. CRISPR (clustered regularly interspaced short palindromic repeat), is an adaptive immune system that provides protection against mobile genetic elements (viruses, transposable elements and conjugative plasmids). CRISPR clusters contain sequences complementary to antecedent mobile elements and target invading nucleic acids. CRISPR clusters are transcribed and processed into CRISPR RNA (crRNA). Functions as a ssRNA-specific endoribonuclease. Involved in the integration of spacer DNA into the CRISPR cassette. This is CRISPR-associated endoribonuclease Cas2 from Thermococcus kodakarensis (strain ATCC BAA-918 / JCM 12380 / KOD1) (Pyrococcus kodakaraensis (strain KOD1)).